A 2139-amino-acid polypeptide reads, in one-letter code: Voltage-dependent L-type calcium channel subunit alpha-1C (2139 aa).

The tract at residues 1–20 (MVNENTRMYVPEENHQGSNY) is disordered. Residues 1 to 124 (MVNENTRMYV…RACISIVEWK (124 aa)) are Cytoplasmic-facing. Positions 47 to 68 (GAALSWQAAIDAARQAKLMGSA) are calmodulin-binding. Residues 73-98 (ISTVSSTQRKRQQYGKPKKQGGTTAT) form a disordered region. Residues 80–91 (QRKRQQYGKPKK) are compositionally biased toward basic residues. The stretch at 111–408 (NPIRRACISI…LVLGVLSGEF (298 aa)) is one I repeat. Residues 125–143 (PFEIIILLTIFANCVALAI) traverse the membrane as a helical segment. The Extracellular segment spans residues 144–158 (YIPFPEDDSNATNSN). Residue Asn153 is glycosylated (N-linked (GlcNAc...) asparagine). Residues 159–179 (LERVEYLFLIIFTVEAFLKVI) form a helical membrane-spanning segment. Residues 180–188 (AYGLLFHPN) are Cytoplasmic-facing. A helical membrane pass occupies residues 189–209 (AYLRNGWNLLDFIIVVVGLFS). Residues 210–232 (AILEQATKADGANALGGKGAGFD) are Extracellular-facing. The chain crosses the membrane as a helical span at residues 233–251 (VKALRAFRVLRPLRLVSGV). The Cytoplasmic segment spans residues 252–268 (PSLQVVLNSIIKAMVPL). A helical membrane pass occupies residues 269-290 (LHIALLVLFVIIIYAIIGLELF). Topologically, residues 291–350 (MGKMHKTCYNQEGIIDVPAEEDPSPCALETGHGRQCQNGTVCKPGWDGPKHGITNFDNFA) are extracellular. 2 disulfides stabilise this stretch: Cys298–Cys326 and Cys316–Cys332. The N-linked (GlcNAc...) asparagine glycan is linked to Asn328. The segment at residues 351–372 (FAMLTVFQCITMEGWTDVLYWM) is an intramembrane region (pore-forming). The Selectivity filter of repeat I motif lies at 361 to 364 (TMEG). Position 363 (Glu363) interacts with Ca(2+). The Extracellular segment spans residues 373–380 (QDAMGYEL). The helical transmembrane segment at 381-401 (PWVYFVSLVIFGSFFVLNLVL) threads the bilayer. At 402 to 524 (GVLSGEFSKE…RKCRAAVKSN (123 aa)) the chain is on the cytoplasmic side. The segment at 428 to 445 (QQLEEDLKGYLDWITQAE) is AID/alpha-interaction domain; mediates interaction with the beta subunit. The disordered stretch occupies residues 449–481 (PENEDEGMDEDKPRNMSMPTSETESVNTENVAG). A compositionally biased stretch (polar residues) spans 465–478 (SMPTSETESVNTEN). Ser469 carries the post-translational modification Phosphoserine. Phosphothreonine is present on Thr476. One copy of the II repeat lies at 510 to 756 (NRFCRRKCRA…VFLAIAVDNL (247 aa)). The helical transmembrane segment at 525 to 543 (VFYWLVIFLVFLNTLTIAS) threads the bilayer. Residues 544-554 (EHYNQPHWLTE) are Extracellular-facing. A helical transmembrane segment spans residues 555-575 (VQDTANKALLALFTAEMLLKM). At 576–586 (YSLGLQAYFVS) the chain is on the cytoplasmic side. A helical transmembrane segment spans residues 587–606 (LFNRFDCFIVCGGILETILV). Residues 607 to 615 (ETKIMSPLG) are Extracellular-facing. Residues 616–634 (ISVLRCVRLLRIFKITRYW) traverse the membrane as a helical segment. Residues 635–653 (NSLSNLVASLLNSVRSIAS) are Cytoplasmic-facing. Residues 654–673 (LLLLLFLFIIIFSLLGMQLF) form a helical membrane-spanning segment. The Extracellular segment spans residues 674 to 693 (GGKFNFDEMQTRRSTFDNFP). An intramembrane region (pore-forming) is located at residues 694–715 (QSLLTVFQILTGEDWNSVMYDG). The short motif at 704 to 707 (TGED) is the Selectivity filter of repeat II element. Glu706 provides a ligand contact to Ca(2+). Residues 716–725 (IMAYGGPSFP) are Extracellular-facing. The chain crosses the membrane as a helical span at residues 726 to 745 (GMLVCIYFIILFICGNYILL). Topologically, residues 746-900 (NVFLAIAVDN…LQCHRIVNDT (155 aa)) are cytoplasmic. Residues 764 to 861 (SAQKEEEEEK…EMPVGPRPRP (98 aa)) are disordered. Positions 783–806 (SPEKKQEVMEKPAVEESKEEKIEL) are enriched in basic and acidic residues. Residues Ser808 and Ser815 each carry the phosphoserine modification. Positions 829–876 (SENEDKSPHSNPDTAGEEDEEEPEMPVGPRPRPLSELHLKEKAVPMPE) are interaction with STAC2. Acidic residues predominate over residues 843-852 (AGEEDEEEPE). Residues 887 to 1169 (NRFRLQCHRI…IFVGFVIVTF (283 aa)) form an III repeat. Residues 901–919 (IFTNLILFFILLSSISLAA) form a helical membrane-spanning segment. The Extracellular portion of the chain corresponds to 920–931 (EDPVQHTSFRNH). A helical transmembrane segment spans residues 932–951 (ILGNADYVFTSIFTLEIILK). Residues 952 to 967 (MTAYGAFLHKGSFCRN) are Cytoplasmic-facing. The helical transmembrane segment at 968–986 (YFNILDLLVVSVSLISFGI) threads the bilayer. The Extracellular segment spans residues 987 to 993 (QSSAINV). Residues 994 to 1012 (VKILRVLRVLRPLRAINRA) traverse the membrane as a helical segment. At 1013–1031 (KGLKHVVQCVFVAIRTIGN) the chain is on the cytoplasmic side. A helical membrane pass occupies residues 1032-1051 (IVIVTTLLQFMFACIGVQLF). Residues 1052–1101 (KGKLYTCSDSSKQTEAECKGNYITYKDGEVDHPIIQPRSWENSKFDFDNV) are Extracellular-facing. Residues Cys1058 and Cys1069 are joined by a disulfide bond. The segment at 1089–1178 (RSWENSKFDF…FQEQGEQEYK (90 aa)) is dihydropyridine binding. Positions 1102 to 1122 (LAAMMALFTVSTFEGWPELLY) form an intramembrane region, pore-forming. The short motif at 1113-1116 (TFEG) is the Selectivity filter of repeat III element. Glu1115 provides a ligand contact to Ca(2+). The Extracellular portion of the chain corresponds to 1123–1139 (RSIDSHTEDKGPIYNYR). Residues 1140-1161 (VEISIFFIIYIIIIAFFMMNIF) traverse the membrane as a helical segment. At 1162 to 1219 (VGFVIVTFQEQGEQEYKNCELDKNQRQCVEYALKARPLRRYIPKNQHQYKVWYVVNST) the chain is on the cytoplasmic side. Residues 1206–1479 (NQHQYKVWYV…LFVAVIMDNF (274 aa)) form an IV repeat. The chain crosses the membrane as a helical span at residues 1220–1241 (YFEYLMFVLILLNTICLAMQHY). Over 1242 to 1249 (GQSCLFKI) the chain is Extracellular. Residues 1250–1271 (AMNILNMLFTGLFTVEMILKLI) traverse the membrane as a helical segment. At 1272–1281 (AFKPKGYFSD) the chain is on the cytoplasmic side. Residues 1282-1301 (PWNVFDFLIVIGSIIDVILS) form a helical membrane-spanning segment. The Extracellular portion of the chain corresponds to 1302–1324 (ETNPAEHTQCSPSMSAEENSRIS). The chain crosses the membrane as a helical span at residues 1325 to 1343 (ITFFRLFRVMRLVKLLSRG). Topologically, residues 1344-1361 (EGIRTLLWTFIKSFQALP) are cytoplasmic. The chain crosses the membrane as a helical span at residues 1362 to 1382 (YVALLIVMLFFIYAVIGMQVF). The Extracellular segment spans residues 1383–1404 (GKIALNDTTEINRNNNFQTFPQ). The N-linked (GlcNAc...) asparagine glycan is linked to Asn1388. An intramembrane region (pore-forming) is located at residues 1405–1423 (AVLLLFRCATGEAWQDIML). Residues 1414-1417 (TGEA) carry the Selectivity filter of repeat IV motif. Over 1424 to 1451 (ACMPGKKCAPESEPSNSTEGETPCGSSF) the chain is Extracellular. The tract at residues 1430-1498 (KCAPESEPSN…LGPHHLDEFK (69 aa)) is dihydropyridine binding. A disulfide bond links Cys1431 and Cys1447. N-linked (GlcNAc...) asparagine glycosylation occurs at Asn1439. The segment at 1444 to 1486 (ETPCGSSFAVFYFISFYMLCAFLIINLFVAVIMDNFDYLTRDW) is phenylalkylamine binding. Residues 1452–1476 (AVFYFISFYMLCAFLIINLFVAVIM) traverse the membrane as a helical segment. The Cytoplasmic segment spans residues 1477–2139 (DNFDYLTRDW…ADSRSYVSNL (663 aa)). Residues 1611–1638 (DEVTVGKFYATFLIQEYFRKFKKRKEQG) form an important for interaction with STAC1, STAC2 and STAC3 region. Residues 1611 to 1644 (DEVTVGKFYATFLIQEYFRKFKKRKEQGLVGKPS) are calmodulin-binding. The tract at residues 1617–1637 (KFYATFLIQEYFRKFKKRKEQ) is calmodulin-binding IQ region. Positions 1651–1670 (LQAGLRTLHDIGPEIRRAIS) are important for localization in at the junctional membrane. Phosphoserine is present on residues Ser1670 and Ser1691. 2 stretches are compositionally biased toward polar residues: residues 1732-1741 (KTGNNQADTE) and 1751-1763 (STFTPSSYSSTGS). The disordered stretch occupies residues 1732–1773 (KTGNNQADTESPSHEKLVDSTFTPSSYSSTGSNANINNANNT). Low complexity predominate over residues 1764–1773 (NANINNANNT). Ser1897 carries the phosphoserine; by PKA modification. The interval 1940-1966 (RSHSPTTFPRPCPTPPVTPGSRGRPLR) is disordered. The span at 1947–1957 (FPRPCPTPPVT) shows a compositional bias: pro residues.

Belongs to the calcium channel alpha-1 subunit (TC 1.A.1.11) family. CACNA1C subfamily. Component of a calcium channel complex consisting of a pore-forming alpha subunit (CACNA1C) and ancillary beta, gamma and delta subunits. The channel complex contains alpha, beta, gamma and delta subunits in a 1:1:1:1 ratio, i.e. it contains only one of each type of subunit. CACNA1C channel activity is modulated by ancillary subunits, such as CACNB1, CACNB2, CACNB3, CACNA2D1 and CACNA2D4. Interacts with the gamma subunits CACNG4, CACNG6, CACNG7 and CACNG8. Interacts with CACNB1. Interacts with CACNB2. Identified in a complex with CACNA2D4 and CACNB3. Interacts with CACNB3. Interacts with CACNA2D1. Interacts with CACNA2D4. Interacts with CALM1. Interacts (via the N-terminus and the C-terminal C and IQ motifs) with CABP1; this inhibits Ca(2+)-dependent channel inactivation. The binding via the C motif is calcium independent whereas the binding via IQ requires the presence of calcium and is mutually exclusive with calmodulin binding. The binding to the cytoplasmic N-terminal domain is calcium independent but is essential for the channel modulation. Interacts (via C-terminal CDB motif) with CABP5; in a calcium-dependent manner. Interacts with CIB1; the interaction increases upon cardiomyocytes hypertrophy. Interacts with STAC2 and STAC3; this inhibits channel inactivation. Post-translationally, phosphorylation by PKA at Ser-1897 activates the channel. Elevated levels of blood glucose lead to increased phosphorylation by PKA. As to expression, detected in embryonic heart. Detected in retina in rod bipolar cells. Detected in tibialis artery (at protein level). Detected in smooth muscle cells from tibialis artery and in mesenteric artery. High expression in heart, followed by brain and spinal cord.

Its subcellular location is the cell membrane. The protein resides in the sarcolemma. It is found in the perikaryon. It localises to the postsynaptic density membrane. The protein localises to the cell projection. Its subcellular location is the dendrite. The protein resides in the T-tubule. It carries out the reaction Ca(2+)(in) = Ca(2+)(out). Its activity is regulated as follows. Inhibited by dihydropyridines (DHP), such as isradipine. Inhibited by nifedipine. Channel activity is regulated by Ca(2+) and calmodulin. Binding of STAC1, STAC2 or STAC3 to a region that overlaps with the calmodulin binding site inhibits channel inactivation by Ca(2+) and calmodulin. Binding of calmodulin or CABP1 at the same regulatory sites results in opposite effects on the channel function. Shear stress and pressure increases calcium channel activity. Pore-forming, alpha-1C subunit of the voltage-gated calcium channel that gives rise to L-type calcium currents. Mediates influx of calcium ions into the cytoplasm, and thereby triggers calcium release from the sarcoplasm. Plays an important role in excitation-contraction coupling in the heart. Required for normal heart development and normal regulation of heart rhythm. Required for normal contraction of smooth muscle cells in blood vessels and in the intestine. Essential for normal blood pressure regulation via its role in the contraction of arterial smooth muscle cells. Long-lasting (L-type) calcium channels belong to the 'high-voltage activated' (HVA) group. The protein is Voltage-dependent L-type calcium channel subunit alpha-1C (Cacna1c) of Mus musculus (Mouse).